The sequence spans 129 residues: Succinate dehydrogenase subunit 3-2, mitochondrial (129 aa).

The transit peptide at 1–58 (MEKYQSKARFAPLSDAPFALRGALGSSNSSFNNIDHLRQSSSSGQARSYTSSPLGALR) directs the protein to the mitochondrion. Residues 27-53 (SNSSFNNIDHLRQSSSSGQARSYTSSP) are compositionally biased toward polar residues. A disordered region spans residues 27–66 (SNSSFNNIDHLRQSSSSGQARSYTSSPLGALRPKMFPSGN). His87 contributes to the heme binding site. The helical transmembrane segment at 105 to 127 (IFGAALGAVIISIPLATKFSLMF) threads the bilayer.

As to quaternary structure, component of complex II composed of eight subunits in plants: four classical SDH subunits SDH1, SDH2, SDH3 and SDH4 (a flavoprotein (FP), an iron-sulfur protein (IP), and a cytochrome b composed of a large and a small subunit.), as well as four subunits unknown in mitochondria from bacteria and heterotrophic eukaryotes. Requires heme as cofactor.

Its subcellular location is the mitochondrion inner membrane. The protein operates within carbohydrate metabolism; tricarboxylic acid cycle. Membrane-anchoring subunit of succinate dehydrogenase (SDH). The polypeptide is Succinate dehydrogenase subunit 3-2, mitochondrial (Oryza sativa subsp. japonica (Rice)).